The following is a 358-amino-acid chain: Fructose-bisphosphate aldolase 2, cytoplasmic (358 aa).

Arg-39 provides a ligand contact to substrate. Glu-183 acts as the Proton acceptor in catalysis. Catalysis depends on Lys-225, which acts as the Schiff-base intermediate with dihydroxyacetone-P. Residues 266-268 and Arg-298 each bind substrate; that span reads SGG.

Belongs to the class I fructose-bisphosphate aldolase family. As to quaternary structure, homotetramer.

The protein localises to the cytoplasm. Its subcellular location is the cytosol. It catalyses the reaction beta-D-fructose 1,6-bisphosphate = D-glyceraldehyde 3-phosphate + dihydroxyacetone phosphate. It participates in carbohydrate degradation; glycolysis; D-glyceraldehyde 3-phosphate and glycerone phosphate from D-glucose: step 4/4. In terms of biological role, fructose-bisphosphate aldolase that plays a key role in glycolysis and gluconeogenesis. In Oryza sativa subsp. japonica (Rice), this protein is Fructose-bisphosphate aldolase 2, cytoplasmic.